Reading from the N-terminus, the 171-residue chain is Ribosome maturation factor RimM (171 aa).

Residues 96-170 (PDSYYHFQLE…TMTVRLPDGL (75 aa)) enclose the PRC barrel domain.

It belongs to the RimM family. In terms of assembly, binds ribosomal protein uS19.

It is found in the cytoplasm. Its function is as follows. An accessory protein needed during the final step in the assembly of 30S ribosomal subunit, possibly for assembly of the head region. Essential for efficient processing of 16S rRNA. May be needed both before and after RbfA during the maturation of 16S rRNA. It has affinity for free ribosomal 30S subunits but not for 70S ribosomes. The sequence is that of Ribosome maturation factor RimM from Heliobacterium modesticaldum (strain ATCC 51547 / Ice1).